The following is a 153-amino-acid chain: Small ribosomal subunit protein uS5 (153 aa).

Positions 15–78 constitute an S5 DRBM domain; that stretch reads FQEVVVNVGR…DDAFKNLIHV (64 aa).

Belongs to the universal ribosomal protein uS5 family. Part of the 30S ribosomal subunit. Contacts proteins S4 and S8.

In terms of biological role, with S4 and S12 plays an important role in translational accuracy. Located at the back of the 30S subunit body where it stabilizes the conformation of the head with respect to the body. The protein is Small ribosomal subunit protein uS5 of Helicobacter acinonychis (strain Sheeba).